The chain runs to 454 residues: Membrane-bound lytic murein transglycosylase F (454 aa).

The signal sequence occupies residues 1–24; that stretch reads MRRPLRRVTVVLLWVALAIGVAWF. The tract at residues 25 to 265 is non-LT domain; the sequence is YDYRRSMQSL…IYNRYYTAVD (241 aa). Residues 266–454 are LT domain; the sequence is TFDYVDVKKF…YDILKQKKAV (189 aa). The active site involves E311.

The protein in the N-terminal section; belongs to the bacterial solute-binding protein 3 family. It in the C-terminal section; belongs to the transglycosylase Slt family.

Its subcellular location is the cell outer membrane. It catalyses the reaction Exolytic cleavage of the (1-&gt;4)-beta-glycosidic linkage between N-acetylmuramic acid (MurNAc) and N-acetylglucosamine (GlcNAc) residues in peptidoglycan, from either the reducing or the non-reducing ends of the peptidoglycan chains, with concomitant formation of a 1,6-anhydrobond in the MurNAc residue.. In terms of biological role, murein-degrading enzyme that degrades murein glycan strands and insoluble, high-molecular weight murein sacculi, with the concomitant formation of a 1,6-anhydromuramoyl product. Lytic transglycosylases (LTs) play an integral role in the metabolism of the peptidoglycan (PG) sacculus. Their lytic action creates space within the PG sacculus to allow for its expansion as well as for the insertion of various structures such as secretion systems and flagella. The chain is Membrane-bound lytic murein transglycosylase F from Desulfosudis oleivorans (strain DSM 6200 / JCM 39069 / Hxd3) (Desulfococcus oleovorans).